The following is a 222-amino-acid chain: Probable mitochondrial import inner membrane translocase subunit Tim17 3 (222 aa).

The next 3 helical transmembrane spans lie at 16–36, 60–80, and 115–135; these read CGCA…LKGF, SIAG…CALV, and ALVG…VATI.

This sequence belongs to the Tim17/Tim22/Tim23 family. Component of the TIM23 complex at least composed of Tim23, Tim17 (Tim17a1, Tim17a2 or Tim17b1) and a Tim50. The complex interacts with the Tim44 component of the PAM complex.

The protein resides in the mitochondrion inner membrane. Its function is as follows. Essential component of the TIM23 complex, a complex that mediates the translocation of transit peptide-containing proteins across the mitochondrial inner membrane. The chain is Probable mitochondrial import inner membrane translocase subunit Tim17 3 (Tim17a1) from Drosophila melanogaster (Fruit fly).